The following is a 562-amino-acid chain: MGQTPSVESQESKETKNEMPELKSREDILDFFNNRSLSILLPMEIECFKSRLGDKDLSDPLTKDEFNTLLRIADSNSQLQILLWNFFLKISAFPFLSNRSESMTGFGILKGIILLTRERIKKYLGWSNAKLIKLIFIGLTSQEKVGVKTEASVFKIQHVLDTLDGIDLASSTVKDTDMLSFITWLLLLSVHCPTSNCKLNEKSLYDKWKDYEIVASSMVRSMNKKITTTGKGIGISYSDFSHTIVAVSKNVMSPLENIVEHMLYKQDDLLEFPCLDTFLKETKLMTYPLVAQLCTVLPNEIVMSQLQKLYVGRESGYSMRSLQSKVFNWKAATILLVSGTRIVDDIEYSENKNPRYKRFLEEYPKLKDEDQEMDDCHNLKKKVTFAVYIDEPWRVTNKNYFGEKRTSIIELSPRQDKFNSLKVGSVYFNTIGGGIGIGNNQPVTKLNSVRYAPGNVSLTLDNTLEFGVFRHTGYGGTIGPSELLKKNNEENKAFEIRFLIRDVEVWGCGGEKELEEQLREWKWEEAEAKRRQEINLKTMGEDRALLEMAGIIGQHGQSGGSI.

The interval 1 to 21 (MGQTPSVESQESKETKNEMPE) is disordered. Residues 10–21 (QESKETKNEMPE) show a composition bias toward basic and acidic residues. In terms of domain architecture, TLDc spans 283 to 509 (KLMTYPLVAQ…IRDVEVWGCG (227 aa)).

Belongs to the RTC5 family.

The protein localises to the cytoplasm. Functionally, may be involved in a process influencing telomere capping. This chain is Restriction of telomere capping protein 5 (RTC5), found in Vanderwaltozyma polyspora (strain ATCC 22028 / DSM 70294 / BCRC 21397 / CBS 2163 / NBRC 10782 / NRRL Y-8283 / UCD 57-17) (Kluyveromyces polysporus).